The following is a 547-amino-acid chain: Chaperonin GroEL (547 aa).

Residues 30–33, lysine 51, 87–91, glycine 415, 480–482, and aspartate 496 each bind ATP; these read TLGP, DGTTT, and NAA.

This sequence belongs to the chaperonin (HSP60) family. In terms of assembly, forms a cylinder of 14 subunits composed of two heptameric rings stacked back-to-back. Interacts with the co-chaperonin GroES.

It is found in the cytoplasm. The enzyme catalyses ATP + H2O + a folded polypeptide = ADP + phosphate + an unfolded polypeptide.. Its function is as follows. Together with its co-chaperonin GroES, plays an essential role in assisting protein folding. The GroEL-GroES system forms a nano-cage that allows encapsulation of the non-native substrate proteins and provides a physical environment optimized to promote and accelerate protein folding. The polypeptide is Chaperonin GroEL (Glaesserella parasuis serovar 5 (strain SH0165) (Haemophilus parasuis)).